The primary structure comprises 257 residues: MNRITNLFQTQKDGILSVYFTAGYPNLNDTASILKALQAKGIHMVEVGIPFSDPMADGPVIQEAATQALRNGMSLHLLFGQLREIRSEVQIPIILMGYLNPIMQYGFEKFCASCVEAGVDGMIIPDLPYADYIADYKEIADRHDLKMIMLITPETSEERIRLIDAHTSGFIYMVSSAATTGAQQDFNEQKQAYFRRINAMNLQNPRLVGFGISNKATFEAAIAHSSGAIIGSKFVQLLKSEATPAEAVDKLLEALKQ.

Catalysis depends on proton acceptor residues E46 and D57.

This sequence belongs to the TrpA family. In terms of assembly, tetramer of two alpha and two beta chains.

The enzyme catalyses (1S,2R)-1-C-(indol-3-yl)glycerol 3-phosphate + L-serine = D-glyceraldehyde 3-phosphate + L-tryptophan + H2O. Its pathway is amino-acid biosynthesis; L-tryptophan biosynthesis; L-tryptophan from chorismate: step 5/5. In terms of biological role, the alpha subunit is responsible for the aldol cleavage of indoleglycerol phosphate to indole and glyceraldehyde 3-phosphate. In Parabacteroides distasonis (strain ATCC 8503 / DSM 20701 / CIP 104284 / JCM 5825 / NCTC 11152), this protein is Tryptophan synthase alpha chain.